Reading from the N-terminus, the 394-residue chain is F-box protein At2g17830 (394 aa).

One can recognise an F-box domain in the interval 1–47; sequence MAIMSDLPRDLLAEILSRVPLASLRSVRFTCKKWNDLSKDRSFLKKQ.

The sequence is that of F-box protein At2g17830 from Arabidopsis thaliana (Mouse-ear cress).